Consider the following 235-residue polypeptide: Ribose-5-phosphate isomerase A (235 aa).

Substrate contacts are provided by residues 32 to 35 (TGST), 89 to 92 (DGAD), and 102 to 105 (KGGG). Catalysis depends on Glu-111, which acts as the Proton acceptor. Lys-129 contacts substrate.

This sequence belongs to the ribose 5-phosphate isomerase family. Homodimer.

It catalyses the reaction aldehydo-D-ribose 5-phosphate = D-ribulose 5-phosphate. The protein operates within carbohydrate degradation; pentose phosphate pathway; D-ribose 5-phosphate from D-ribulose 5-phosphate (non-oxidative stage): step 1/1. In terms of biological role, catalyzes the reversible conversion of ribose-5-phosphate to ribulose 5-phosphate. This chain is Ribose-5-phosphate isomerase A, found in Synechocystis sp. (strain ATCC 27184 / PCC 6803 / Kazusa).